The chain runs to 148 residues: D-aminoacyl-tRNA deacylase (148 aa).

The Gly-cisPro motif, important for rejection of L-amino acids signature appears at 137–138; sequence GP.

The protein belongs to the DTD family. Homodimer.

The protein localises to the cytoplasm. The catalysed reaction is glycyl-tRNA(Ala) + H2O = tRNA(Ala) + glycine + H(+). It catalyses the reaction a D-aminoacyl-tRNA + H2O = a tRNA + a D-alpha-amino acid + H(+). In terms of biological role, an aminoacyl-tRNA editing enzyme that deacylates mischarged D-aminoacyl-tRNAs. Also deacylates mischarged glycyl-tRNA(Ala), protecting cells against glycine mischarging by AlaRS. Acts via tRNA-based rather than protein-based catalysis; rejects L-amino acids rather than detecting D-amino acids in the active site. By recycling D-aminoacyl-tRNA to D-amino acids and free tRNA molecules, this enzyme counteracts the toxicity associated with the formation of D-aminoacyl-tRNA entities in vivo and helps enforce protein L-homochirality. This chain is D-aminoacyl-tRNA deacylase, found in Oenococcus oeni (strain ATCC BAA-331 / PSU-1).